We begin with the raw amino-acid sequence, 55 residues long: Large ribosomal subunit protein bL33 (55 aa).

Belongs to the bacterial ribosomal protein bL33 family.

The sequence is that of Large ribosomal subunit protein bL33 from Bartonella bacilliformis (strain ATCC 35685 / KC583 / Herrer 020/F12,63).